We begin with the raw amino-acid sequence, 552 residues long: Sensor histidine kinase DpiB (552 aa).

At Met1–Arg21 the chain is on the cytoplasmic side. A helical membrane pass occupies residues Ile22–Thr42. Over Ala43–Pro182 the chain is Periplasmic. The helical transmembrane segment at Met183–Ala203 threads the bilayer. Residues His204–Arg552 lie on the Cytoplasmic side of the membrane. Residues Arg222–Ala292 form the PAS domain. The region spanning Thr344–Lys541 is the Histidine kinase domain. The residue at position 347 (His347) is a Phosphohistidine; by autocatalysis.

Autophosphorylated.

Its subcellular location is the cell inner membrane. It catalyses the reaction ATP + protein L-histidine = ADP + protein N-phospho-L-histidine.. Its activity is regulated as follows. Autophosphorylation is induced in vitro by dithiothreitol (DTT). Functionally, member of the two-component regulatory system DpiA/DpiB, which is essential for expression of citrate-specific fermentation genes and genes involved in plasmid inheritance. Could be involved in response to both the presence of citrate and external redox conditions. Functions as a sensor kinase that phosphorylates DpiA in the presence of citrate. This chain is Sensor histidine kinase DpiB (dpiB), found in Escherichia coli (strain K12).